A 250-amino-acid polypeptide reads, in one-letter code: NADH-quinone oxidoreductase subunit C (250 aa).

It belongs to the complex I 30 kDa subunit family. NDH-1 is composed of 14 different subunits. Subunits NuoB, C, D, E, F, and G constitute the peripheral sector of the complex.

Its subcellular location is the cell inner membrane. It catalyses the reaction a quinone + NADH + 5 H(+)(in) = a quinol + NAD(+) + 4 H(+)(out). Functionally, NDH-1 shuttles electrons from NADH, via FMN and iron-sulfur (Fe-S) centers, to quinones in the respiratory chain. The immediate electron acceptor for the enzyme in this species is believed to be ubiquinone. Couples the redox reaction to proton translocation (for every two electrons transferred, four hydrogen ions are translocated across the cytoplasmic membrane), and thus conserves the redox energy in a proton gradient. The polypeptide is NADH-quinone oxidoreductase subunit C (Xylella fastidiosa (strain M23)).